The following is a 131-amino-acid chain: MMNDIIADGLTRIRNAAMRGLEVTQLNHSKLMEAVLKVFEDKGYIESFKVVEDGNKKFINVTLKYDENGNSVINEVKKVSKPGRRVYKGYEDIKRFKNGYGTLVVSTNKGVLPNDEAYKLKVGGEVICSIW.

The protein belongs to the universal ribosomal protein uS8 family. As to quaternary structure, part of the 30S ribosomal subunit. Contacts proteins S5 and S12.

Its function is as follows. One of the primary rRNA binding proteins, it binds directly to 16S rRNA central domain where it helps coordinate assembly of the platform of the 30S subunit. The polypeptide is Small ribosomal subunit protein uS8 (Nautilia profundicola (strain ATCC BAA-1463 / DSM 18972 / AmH)).